Reading from the N-terminus, the 770-residue chain is MLPGLALVLLAAWTARALEVPTDGNAGLLAEPQVAMFCGKLNMHMNVQNGKWESDPSGTKTCIGTKEGILQYCQEVYPELQITNVVEANQPVTIQNWCKRSRKQCKTHTHIVIPYRCLVGEFVSDALLVPDKCKFLHQERMDVCETHLHWHTVAKETCSEKSTNLHDYGMLLPCGIDKFRGVEFVCCPLAEESDNIDSADAEEDDSDVWWGGADTDYADGSEDKVVEVAEEEEVADVEEEEAEDDEDDEDGDEVEEEAEEPYEEATERTTSIATTTTTTTESVEEVVREVCSEQAETGPCRAMISRWYFDVTEGKCAPFFYGGCGGNRNNFDTEEYCMAVCGSVMSQSLLKTTQEHLPQDPVKLPTTAASTPDAVDKYLETPGDENEHAHFQKAKERLEAKHRERMSQVMREWEEAERQAKNLPKADKKAVIQHFQEKVESLEQEAANERQQLVETHMARVEAMLNDRRRLALENYITALQAVPPRPRHVFNMLKKYVRAEQKDRQHTLKHFEHVRMVDPKKAAQIRSQVMTHLRVIYERMNQSLSLLYNVPAVAEEIQDEVDELLQKEQNYSDDVLANMISEPRISYGNDALMPSLTETKTTVELLPVNGEFSLDDLQPWHPFGVDSVPANTENEVEPVDARPAADRGLTTRPGSGLTNIKTEEISEVKMDAEFRHDSGYEVHHQKLVFFAEDVGSNKGAIIGLMVGGVVIATVIVITLVMLKKKQYTSIHHGVVEVDAAVTPEERHLSKMQQNGYENPTYKFFEQMQN.

Residues 1 to 17 form the signal peptide; the sequence is MLPGLALVLLAAWTARA. Topologically, residues 18–701 are extracellular; the sequence is LEVPTDGNAG…AEDVGSNKGA (684 aa). The interval 28 to 123 is GFLD subdomain; that stretch reads LLAEPQVAMF…PYRCLVGEFV (96 aa). The E1 domain occupies 28–189; that stretch reads LLAEPQVAMF…RGVEFVCCPL (162 aa). 6 disulfides stabilise this stretch: Cys38/Cys62, Cys73/Cys117, Cys98/Cys105, Cys133/Cys187, Cys144/Cys174, and Cys158/Cys186. Position 96-110 (96-110) interacts with heparin; the sequence is NWCKRSRKQCKTHTH. The tract at residues 131–189 is cuBD subdomain; that stretch reads DKCKFLHQERMDVCETHLHWHTVAKETCSEKSTNLHDYGMLLPCGIDKFRGVEFVCCPL. A copper-binding region spans residues 135 to 155; sequence FLHQERMDVCETHLHWHTVAK. Residues His147, His151, and Tyr168 each contribute to the Cu(2+) site. A zinc-binding region spans residues 181–188; the sequence is GVEFVCCP. Positions 183, 186, and 187 each coordinate Zn(2+). A compositionally biased stretch (acidic residues) spans 196-207; sequence IDSADAEEDDSD. Residues 196–284 form a disordered region; the sequence is IDSADAEEDD…TTTTTTESVE (89 aa). A Phosphoserine; by CK2 modification is found at Ser198. The residue at position 206 (Ser206) is a Phosphoserine; by CK1. Tyr217 and Tyr262 each carry sulfotyrosine. Residues 228-264 are compositionally biased toward acidic residues; the sequence is VAEEEEVADVEEEEAEDDEDDEDGDEVEEEAEEPYEE. Residues 268-281 show a composition bias toward low complexity; the sequence is RTTSIATTTTTTTE. 3 disulfide bridges follow: Cys291/Cys341, Cys300/Cys324, and Cys316/Cys337. One can recognise a BPTI/Kunitz inhibitor domain in the interval 291-341; that stretch reads CSEQAETGPCRAMISRWYFDVTEGKCAPFFYGGCGGNRNNFDTEEYCMAVC. The residue at position 336 (Tyr336) is a Sulfotyrosine. Positions 344-365 match the OX-2 motif; that stretch reads VMSQSLLKTTQEHLPQDPVKLP. The E2 domain occupies 374-565; the sequence is AVDKYLETPG…EEIQDEVDEL (192 aa). Residues 391–423 form a heparin-binding region; the sequence is FQKAKERLEAKHRERMSQVMREWEEAERQAKNL. A Phosphoserine modification is found at Ser441. Residues 491-522 form a heparin-binding region; it reads FNMLKKYVRAEQKDRQHTLKHFEHVRMVDPKK. Tyr497 is modified (phosphotyrosine). Residues 523-540 form a collagen-binding region; it reads AAQIRSQVMTHLRVIYER. 2 N-linked (GlcNAc...) asparagine glycosylation sites follow: Asn542 and Asn571. Residues His677, Tyr681, His684, and His685 each coordinate Cu(2+). Zn(2+) is bound by residues His677, Tyr681, His684, and His685. An interaction with PSEN1 region spans residues 695 to 722; that stretch reads VGSNKGAIIGLMVGGVVIATVIVITLVM. A helical transmembrane segment spans residues 702–722; the sequence is IIGLMVGGVVIATVIVITLVM. Residues 723-770 are Cytoplasmic-facing; sequence LKKKQYTSIHHGVVEVDAAVTPEERHLSKMQQNGYENPTYKFFEQMQN. Residues 724 to 734 carry the Basolateral sorting signal motif; it reads KKKQYTSIHHG. Position 729 is a phosphothreonine (Thr729). Position 730 is a phosphoserine; by APP-kinase I (Ser730). Positions 732 to 751 are interaction with G(o)-alpha; it reads HHGVVEVDAAVTPEERHLSK. Thr743 is subject to Phosphothreonine; by CDK5 and MAPK10. The tract at residues 756–770 is required for the interaction with KIF5B and for anterograde transport in axons; the sequence is GYENPTYKFFEQMQN. Tyr757 carries the post-translational modification Phosphotyrosine; by ABL1. The short motif at 757–762 is the YENPXY motif; contains endocytosis signal element; that stretch reads YENPTY. Lys763 participates in a covalent cross-link: Glycyl lysine isopeptide (Lys-Gly) (interchain with G-Cter in ubiquitin).

Belongs to the APP family. In terms of assembly, binds, via its C-terminus, to the PID domain of several cytoplasmic proteins, including APBB family members, the APBA family, MAPK8IP1, SHC1 and NUMB and DAB1. Binding to DAB1 inhibits its serine phosphorylation. Interacts (via NPXY motif) with DAB2 (via PID domain); the interaction is impaired by tyrosine phosphorylation of the NPXY motif. Also interacts with GPCR-like protein BPP, APPBP1, IB1, KNS2 (via its TPR domains), APPBP2 (via BaSS) and DDB1. In vitro, it binds MAPT via the MT-binding domains. Associates with microtubules in the presence of ATP and in a kinesin-dependent manner. Interacts, through a C-terminal domain, with GNAO1. Amyloid-beta protein 42 binds CHRNA7 in hippocampal neurons. Amyloid-beta associates with HADH2. Interacts with CPEB1, ANKS1B and AGER. Interacts with ITM2B. Interacts with ITM2C. Interacts with IDE. Can form homodimers; dimerization is enhanced in the presence of Cu(2+) ions. Can form homodimers; this is promoted by heparin binding. Amyloid-beta protein 40 interacts with S100A9. CTF-alpha product of APP interacts with GSAP. Interacts with SORL1 (via N-terminal ectodomain); this interaction retains APP in the trans-Golgi network and reduces processing into soluble APP-alpha and amyloid-beta peptides. The C99 fragment also interacts with SORL1. Interacts with PLD3. Interacts with VDAC1. Interacts with NSG1; could regulate APP processing. Amyloid-beta protein 42 interacts with FPR2. Interacts (via transmembrane region) with PSEN1; the interaction is direct. Interacts with LRRK2. Interacts (via cytoplasmic domain) with KIF5B. Interacts (via C-terminus) with APBB2/FE65L1 (via C-terminus). Interacts (via intracellular domain) with APBB3. Proteolytically processed under normal cellular conditions. Cleavage either by alpha-secretase, beta-secretase or theta-secretase leads to generation and extracellular release of soluble APP peptides, S-APP-alpha and S-APP-beta, and the retention of corresponding membrane-anchored C-terminal fragments, C80, C83 and C99. Subsequent processing of C80 and C83 by gamma-secretase yields P3 peptides. This is the major secretory pathway and is non-amyloidogenic. Alternatively, presenilin/nicastrin-mediated gamma-secretase processing of C99 releases the amyloid-beta proteins, amyloid-beta protein 40 and amyloid-beta protein 42, major components of amyloid plaques, and the cytotoxic C-terminal fragments, gamma-CTF(50), gamma-CTF(57) and gamma-CTF(59). PSEN1 cleavage is more efficient with C83 than with C99 as substrate (in vitro). Amyloid-beta protein 40 and Amyloid-beta protein 42 are cleaved by ACE. Many other minor amyloid-beta peptides, amyloid-beta 1-X peptides, are found in cerebral spinal fluid (CSF) including the amyloid-beta X-15 peptides, produced from the cleavage by alpha-secretase. Post-translationally, proteolytically cleaved by caspases during neuronal apoptosis. Cleavage at Asp-739 by either caspase-3, -8 or -9 results in the production of the neurotoxic C31 peptide and the increased production of amyloid-beta peptides. In terms of processing, N- and O-glycosylated. Phosphorylation in the C-terminal on tyrosine, threonine and serine residues is neuron-specific. Phosphorylation can affect APP processing, neuronal differentiation and interaction with other proteins. Phosphorylated on Thr-743 in neuronal cells by Cdc5 kinase and Mapk10, in dividing cells by Cdc2 kinase in a cell-cycle dependent manner with maximal levels at the G2/M phase and, in vitro, by GSK-3-beta. The Thr-743 phosphorylated form causes a conformational change which reduces binding of Fe65 family members. In dopaminergic (DA) neurons, phosphorylation on Thr-743 by LRKK2 promotes the production and the nuclear translocation of the APP intracellular domain (AICD) which induces DA neuron apoptosis. Phosphorylation on Tyr-757 is required for SHC binding. Phosphorylated in the extracellular domain by casein kinases on both soluble and membrane-bound APP. This phosphorylation is inhibited by heparin. Post-translationally, extracellular binding and reduction of copper, results in a corresponding oxidation of Cys-144 and Cys-158, and the formation of a disulfide bond. In terms of processing, trophic-factor deprivation triggers the cleavage of surface APP by beta-secretase to release sAPP-beta which is further cleaved to release an N-terminal fragment of APP (N-APP). Amyloid-beta peptides are degraded by IDE. Post-translationally, sulfated on tyrosine residues.

It is found in the cell membrane. The protein resides in the membrane. The protein localises to the perikaryon. It localises to the cell projection. Its subcellular location is the growth cone. It is found in the clathrin-coated pit. The protein resides in the early endosome. The protein localises to the cytoplasmic vesicle. It localises to the endoplasmic reticulum. Its subcellular location is the golgi apparatus. It is found in the secreted. The protein resides in the cell surface. The protein localises to the nucleus. It localises to the cytoplasm. Its function is as follows. Functions as a cell surface receptor and performs physiological functions on the surface of neurons relevant to neurite growth, neuronal adhesion and axonogenesis. Interaction between APP molecules on neighboring cells promotes synaptogenesis. Involved in cell mobility and transcription regulation through protein-protein interactions. Can promote transcription activation through binding to APBB1-KAT5 and inhibit Notch signaling through interaction with Numb. Couples to apoptosis-inducing pathways such as those mediated by G(o) and JIP. Inhibits G(o)-alpha ATPase activity. Acts as a kinesin I membrane receptor, mediating the axonal transport of beta-secretase and presenilin 1. By acting as a kinesin I membrane receptor, plays a role in axonal anterograde transport of cargo towards synapses in axons. May be involved in copper homeostasis/oxidative stress through copper ion reduction. In vitro, copper-metallated APP induces neuronal death directly or is potentiated through Cu(2+)-mediated low-density lipoprotein oxidation. Can regulate neurite outgrowth through binding to components of the extracellular matrix such as heparin and collagen I and IV. Induces a AGER-dependent pathway that involves activation of p38 MAPK, resulting in internalization of amyloid-beta peptide and mitochondrial dysfunction in cultured cortical neurons. Provides Cu(2+) ions for GPC1 which are required for release of nitric oxide (NO) and subsequent degradation of the heparan sulfate chains on GPC1. In terms of biological role, amyloid-beta peptides are lipophilic metal chelators with metal-reducing activity. Binds transient metals such as copper, zinc and iron. Functionally, the gamma-CTF peptides as well as the caspase-cleaved peptides, including C31, are potent enhancers of neuronal apoptosis. The sequence is that of Amyloid-beta precursor protein from Sus scrofa (Pig).